The primary structure comprises 300 residues: GTPase Era (300 aa).

The region spanning 5 to 176 (RSGFVCLIGR…IDVLAAALPP (172 aa)) is the Era-type G domain. A G1 region spans residues 13–20 (GRPNTGKS). 13 to 20 (GRPNTGKS) is a binding site for GTP. The G2 stretch occupies residues 39-43 (QTTRH). The segment at 61-64 (DTPG) is G3. GTP-binding positions include 61–65 (DTPGL) and 125–128 (TKID). The interval 125–128 (TKID) is G4. The interval 155-157 (VSA) is G5. The region spanning 207 to 286 (VHDELPHSLA…YLDLHVNVAK (80 aa)) is the KH type-2 domain.

It belongs to the TRAFAC class TrmE-Era-EngA-EngB-Septin-like GTPase superfamily. Era GTPase family. In terms of assembly, monomer.

It localises to the cell envelope. Its subcellular location is the secreted. The protein localises to the cell wall. In terms of biological role, exhibits GTPase activity. Binds RNA but is probably not involved in ribosome assembly in mycobacteria. This Mycobacterium leprae (strain TN) protein is GTPase Era.